The primary structure comprises 485 residues: Acyl transferase 1 (485 aa).

The Proton acceptor role is filled by histidine 172.

It belongs to the plant acyltransferase family. As to expression, highly expressed in young panicles. Expressed in leaf sheaths and panicles.

In terms of biological role, involved in defense against pathogens. May contribute to disease resistance by potentiating disease resistance signaling, or producing phytoalexin-like secondary products. This Oryza sativa subsp. japonica (Rice) protein is Acyl transferase 1.